The primary structure comprises 290 residues: Glutaredoxin domain-containing cysteine-rich protein 1 (290 aa).

A Glutaredoxin domain is found at 127 to 234 (LQQPSTDLEF…DILTKIERVQ (108 aa)).

It belongs to the GRXCR1 family. Expressed at low levels in adult lung, brain and duodenum with moderate levels in testis. Highly expressed in fetal cochlea.

The protein resides in the cell projection. It localises to the stereocilium. It is found in the microvillus. Its subcellular location is the kinocilium. In terms of biological role, may play a role in actin filament architecture in developing stereocilia of sensory cells. The chain is Glutaredoxin domain-containing cysteine-rich protein 1 (GRXCR1) from Homo sapiens (Human).